The chain runs to 199 residues: V-type ATP synthase subunit E (199 aa).

Belongs to the V-ATPase E subunit family.

Its function is as follows. Produces ATP from ADP in the presence of a proton gradient across the membrane. The protein is V-type ATP synthase subunit E of Clostridium botulinum (strain Hall / ATCC 3502 / NCTC 13319 / Type A).